The sequence spans 429 residues: UDP-N-acetylglucosamine 1-carboxyvinyltransferase (429 aa).

22 to 23 (KN) is a phosphoenolpyruvate binding site. Arg102 contacts UDP-N-acetyl-alpha-D-glucosamine. Cys126 serves as the catalytic Proton donor. 2-(S-cysteinyl)pyruvic acid O-phosphothioketal is present on Cys126. Residues 131–135 (RPVDL), 171–174 (KVSV), Asp316, and Ile338 each bind UDP-N-acetyl-alpha-D-glucosamine.

This sequence belongs to the EPSP synthase family. MurA subfamily.

It localises to the cytoplasm. It catalyses the reaction phosphoenolpyruvate + UDP-N-acetyl-alpha-D-glucosamine = UDP-N-acetyl-3-O-(1-carboxyvinyl)-alpha-D-glucosamine + phosphate. The protein operates within cell wall biogenesis; peptidoglycan biosynthesis. Functionally, cell wall formation. Adds enolpyruvyl to UDP-N-acetylglucosamine. The polypeptide is UDP-N-acetylglucosamine 1-carboxyvinyltransferase (Brucella abortus (strain S19)).